Consider the following 449-residue polypeptide: Aminopeptidase C (449 aa).

Active-site residues include cysteine 70, histidine 364, and asparagine 385.

The protein belongs to the peptidase C1 family. Homohexamer.

It localises to the cytoplasm. It catalyses the reaction Inactivates bleomycin B2 (a cytotoxic glycometallopeptide) by hydrolysis of a carboxyamide bond of beta-aminoalanine, but also shows general aminopeptidase activity. The specificity varies somewhat with source, but amino acid arylamides of Met, Leu and Ala are preferred.. This chain is Aminopeptidase C (pepC), found in Lactobacillus delbrueckii subsp. lactis.